A 62-amino-acid chain; its full sequence is Cytochrome c oxidase copper chaperone (62 aa).

A Phosphoserine modification is found at serine 13. Lysine 17 carries the post-translational modification N6-acetyllysine. Residues cysteine 22 and cysteine 23 each contribute to the Cu cation site. Residues cysteine 22 to isoleucine 62 form the CHCH domain. 2 short sequence motifs (cx9C motif) span residues cysteine 25 to cysteine 35 and cysteine 44 to cysteine 54. 2 disulfide bridges follow: cysteine 25/cysteine 54 and cysteine 35/cysteine 44. At lysine 29 the chain carries N6-acetyllysine.

Belongs to the COX17 family. In terms of assembly, interacts with COA1. Interacts with the chaperone CHCHD4; this is important for correct folding and the formation of disulfide bonds that stabilize the structure. Post-translationally, acetylation by KAT8 promotes assembly of the mitochondrial respiratory chain complex IV (CIV).

The protein localises to the mitochondrion intermembrane space. The protein resides in the cytoplasm. Its function is as follows. Copper metallochaperone essential for the assembly of the mitochondrial respiratory chain complex IV (CIV), also known as cytochrome c oxidase. Binds two copper ions and delivers them to the metallochaperone SCO1 which transports the copper ions to the Cu(A) site on the cytochrome c oxidase subunit II (MT-CO2/COX2). This chain is Cytochrome c oxidase copper chaperone (COX17), found in Sus scrofa (Pig).